A 277-amino-acid polypeptide reads, in one-letter code: B3 domain-containing protein At3g19184 (277 aa).

Residues 33–94 (QSLRVSSSSS…LERRPRRSSR (62 aa)) are disordered. Residues 130–221 (FTKPMLQSHV…TFKVYIIRVN (92 aa)) constitute a DNA-binding region (TF-B3). The segment covering 224–250 (ANNDSDGNEVNDDDSDGNEEDRDNDNE) has biased composition (acidic residues). The disordered stretch occupies residues 224 to 277 (ANNDSDGNEVNDDDSDGNEEDRDNDNESNEKQKETVSEGRQLRSSGKRKRRGRK). Basic and acidic residues predominate over residues 251 to 264 (SNEKQKETVSEGRQ). Over residues 268 to 277 (SGKRKRRGRK) the composition is skewed to basic residues.

It localises to the nucleus. The protein is B3 domain-containing protein At3g19184 of Arabidopsis thaliana (Mouse-ear cress).